A 248-amino-acid polypeptide reads, in one-letter code: Probable transcriptional regulatory protein LAR_0538 (248 aa).

The tract at residues 1–22 (MSGHSKWHNIQGRKNAQDAKRG) is disordered.

This sequence belongs to the TACO1 family.

Its subcellular location is the cytoplasm. This Limosilactobacillus reuteri subsp. reuteri (strain JCM 1112) (Lactobacillus reuteri) protein is Probable transcriptional regulatory protein LAR_0538.